Here is a 161-residue protein sequence, read N- to C-terminus: Nucleotide-binding protein PputGB1_4497 (161 aa).

Belongs to the YajQ family.

Its function is as follows. Nucleotide-binding protein. This chain is Nucleotide-binding protein PputGB1_4497, found in Pseudomonas putida (strain GB-1).